A 1069-amino-acid polypeptide reads, in one-letter code: Degenerin-like protein del-10 (1069 aa).

Topologically, residues Met-1–Gly-95 are cytoplasmic. A helical transmembrane segment spans residues Leu-96–Ile-116. The Extracellular segment spans residues Lys-117–Gly-830. N-linked (GlcNAc...) asparagine glycosylation is found at Asn-216, Asn-290, Asn-374, Asn-454, Asn-539, Asn-545, and Asn-584. A helical transmembrane segment spans residues Ala-831–Ile-851. Residues Gln-852–Val-1069 lie on the Cytoplasmic side of the membrane. Disordered stretches follow at residues Lys-898–Pro-948 and Arg-960–Val-1069. Over residues Gly-915–Lys-928 the composition is skewed to basic and acidic residues. Polar residues predominate over residues Asn-938–Pro-948. The segment covering Tyr-967–Tyr-978 has biased composition (basic and acidic residues).

It belongs to the amiloride-sensitive sodium channel (TC 1.A.6) family.

Its subcellular location is the membrane. The protein is Degenerin-like protein del-10 of Caenorhabditis elegans.